The sequence spans 207 residues: Lipid A acyltransferase PagP (207 aa).

An N-terminal signal peptide occupies residues 1-24 (MKFDLTTAYTLSIPLLASSGTVLA). Catalysis depends on residues His79, Asp122, and Ser123.

The protein belongs to the lipid A palmitoyltransferase family. Homodimer.

It is found in the cell outer membrane. It carries out the reaction a lipid A + a 1,2-diacyl-sn-glycero-3-phosphocholine = a hepta-acyl lipid A + a 2-acyl-sn-glycero-3-phosphocholine. It catalyses the reaction a lipid IVA + a 1,2-diacyl-sn-glycero-3-phosphocholine = a lipid IVB + a 2-acyl-sn-glycero-3-phosphocholine. The enzyme catalyses a lipid IIA + a 1,2-diacyl-sn-glycero-3-phosphocholine = a lipid IIB + a 2-acyl-sn-glycero-3-phosphocholine. In terms of biological role, transfers a fatty acid residue from the sn-1 position of a phospholipid to the N-linked hydroxyfatty acid chain on the proximal unit of lipid A or its precursors. The protein is Lipid A acyltransferase PagP of Photorhabdus asymbiotica subsp. asymbiotica (strain ATCC 43949 / 3105-77) (Xenorhabdus luminescens (strain 2)).